The chain runs to 975 residues: Synaptopodin 2-like protein (975 aa).

Residues 6-85 (EVQVTLAGGA…QLVLTVRRVT (80 aa)) enclose the PDZ domain. 3 disordered regions span residues 18 to 41 (GFRLQGGTEQRKPLQIRRRSQAGR), 86 to 214 (DEGS…PAEA), and 314 to 349 (AGTGTEEEDGIPPTSESELDEETFSDARSLTNQSDW). Phosphoserine is present on residues S105 and S108. The residue at position 138 (T138) is a Phosphothreonine. Residues S140, S163, S175, and S177 each carry the phosphoserine modification. Residues 187 to 200 (GSPSQGDSRVSSPS) are compositionally biased toward polar residues. Positions 202–214 (EEGAALQPPPAEA) are enriched in low complexity. Positions 339–349 (DARSLTNQSDW) are enriched in polar residues. A phosphoserine mark is found at S342, S347, S371, S378, and S381. 4 positions are modified to omega-N-methylarginine: R383, R463, R466, and R476. The interval 491–649 (KVNEGLGSTS…ETKNSPNPEL (159 aa)) is disordered. The span at 502–516 (APSPFAAPPQGPTPL) shows a compositional bias: pro residues. A compositionally biased stretch (polar residues) spans 519 to 528 (FTTVVPSHTP). Low complexity-rich tracts occupy residues 530–540 (SGASSSTQRSS) and 571–580 (SAAAMTSTAS). Phosphoserine occurs at positions 667 and 675. The segment at 687–731 (LGGRSYKTLPQVSPKTPPPMAPKTPPPTTPKTPPPVAPKPGSRGL) is disordered. A compositionally biased stretch (pro residues) spans 701–724 (KTPPPMAPKTPPPTTPKTPPPVAP). Phosphothreonine occurs at positions 702 and 710. R754 carries the post-translational modification Omega-N-methylarginine. Positions 772-797 (EATSGSSLNPGLRPRSPSPTPSLPPS) are disordered. S787 and S789 each carry phosphoserine. T791 is modified (phosphothreonine). Residues R805, R825, and R888 each carry the omega-N-methylarginine modification. S890 is modified (phosphoserine). 2 positions are modified to phosphothreonine: T891 and T897. R909 is subject to Omega-N-methylarginine. At R920 the chain carries Asymmetric dimethylarginine; alternate. At R920 the chain carries Omega-N-methylarginine; alternate. Residues R953 and R955 each carry the omega-N-methylarginine modification.

This sequence belongs to the synaptopodin family.

It is found in the cytoplasm. The protein localises to the cytoskeleton. Functionally, actin-associated protein that may play a role in modulating actin-based shape. This Mus musculus (Mouse) protein is Synaptopodin 2-like protein (Synpo2l).